A 234-amino-acid polypeptide reads, in one-letter code: Purine nucleoside phosphorylase DeoD-type (234 aa).

An a purine D-ribonucleoside-binding site is contributed by His5. Phosphate is bound by residues Gly21, Arg25, Arg44, and 88–91; that span reads RIGS. A purine D-ribonucleoside contacts are provided by residues 180 to 182 and 204 to 205; these read EME and SD. Residue Asp205 is the Proton donor of the active site.

Belongs to the PNP/UDP phosphorylase family. As to quaternary structure, homohexamer; trimer of homodimers.

The enzyme catalyses a purine D-ribonucleoside + phosphate = a purine nucleobase + alpha-D-ribose 1-phosphate. It catalyses the reaction a purine 2'-deoxy-D-ribonucleoside + phosphate = a purine nucleobase + 2-deoxy-alpha-D-ribose 1-phosphate. In terms of biological role, catalyzes the reversible phosphorolytic breakdown of the N-glycosidic bond in the beta-(deoxy)ribonucleoside molecules, with the formation of the corresponding free purine bases and pentose-1-phosphate. This chain is Purine nucleoside phosphorylase DeoD-type, found in Colwellia psychrerythraea (strain 34H / ATCC BAA-681) (Vibrio psychroerythus).